We begin with the raw amino-acid sequence, 706 residues long: ATP-dependent zinc metalloprotease FtsH (706 aa).

A compositionally biased stretch (polar residues) spans 1 to 17; it reads MAKNSLKPSNPYNSEPE. The segment at 1–20 is disordered; that stretch reads MAKNSLKPSNPYNSEPETPQ. The Cytoplasmic portion of the chain corresponds to 1–24; sequence MAKNSLKPSNPYNSEPETPQPRPK. The chain crosses the membrane as a helical span at residues 25 to 45; sequence LPMIYYVVVIALLIGLQLAFF. Topologically, residues 46 to 142 are periplasmic; that stretch reads WSGSSREIPY…RYEGSPGTTW (97 aa). A disordered region spans residues 88-111; it reads GLPKQEEGNDTTRKLLPGAKTPEN. Residues 91 to 100 are compositionally biased toward basic and acidic residues; the sequence is KQEEGNDTTR. Residues 143 to 163 traverse the membrane as a helical segment; the sequence is ISELIQWVLPFALLFGLYFFI. At 164 to 706 the chain is on the cytoplasmic side; that stretch reads FRRMGAGGPG…LRQSRNVSDN (543 aa). ATP is bound at residue 239–246; it reads GPPGTGKT. His462 contacts Zn(2+). The active site involves Glu463. Positions 466 and 539 each coordinate Zn(2+). Residues 641-681 form a disordered region; sequence RPGGQEEDSGEVDCSKKSAENGMVAHEPETTADAESTEKVG.

In the central section; belongs to the AAA ATPase family. This sequence in the C-terminal section; belongs to the peptidase M41 family. As to quaternary structure, homohexamer. Zn(2+) is required as a cofactor.

Its subcellular location is the cell inner membrane. In terms of biological role, acts as a processive, ATP-dependent zinc metallopeptidase for both cytoplasmic and membrane proteins. Plays a role in the quality control of integral membrane proteins. The chain is ATP-dependent zinc metalloprotease FtsH from Chlorobium luteolum (strain DSM 273 / BCRC 81028 / 2530) (Pelodictyon luteolum).